Here is a 197-residue protein sequence, read N- to C-terminus: Imidazoleglycerol-phosphate dehydratase (197 aa).

It belongs to the imidazoleglycerol-phosphate dehydratase family.

Its subcellular location is the cytoplasm. It catalyses the reaction D-erythro-1-(imidazol-4-yl)glycerol 3-phosphate = 3-(imidazol-4-yl)-2-oxopropyl phosphate + H2O. Its pathway is amino-acid biosynthesis; L-histidine biosynthesis; L-histidine from 5-phospho-alpha-D-ribose 1-diphosphate: step 6/9. This Pseudomonas fluorescens (strain SBW25) protein is Imidazoleglycerol-phosphate dehydratase.